A 241-amino-acid chain; its full sequence is Ribonuclease PH (241 aa).

Phosphate is bound by residues R89 and G127–R129.

The protein belongs to the RNase PH family. As to quaternary structure, homohexameric ring arranged as a trimer of dimers.

It catalyses the reaction tRNA(n+1) + phosphate = tRNA(n) + a ribonucleoside 5'-diphosphate. Functionally, phosphorolytic 3'-5' exoribonuclease that plays an important role in tRNA 3'-end maturation. Removes nucleotide residues following the 3'-CCA terminus of tRNAs; can also add nucleotides to the ends of RNA molecules by using nucleoside diphosphates as substrates, but this may not be physiologically important. Probably plays a role in initiation of 16S rRNA degradation (leading to ribosome degradation) during starvation. This chain is Ribonuclease PH, found in Xylella fastidiosa (strain M23).